The sequence spans 387 residues: 3-ketoacyl-CoA thiolase (387 aa).

Residue cysteine 91 is the Acyl-thioester intermediate of the active site. Active-site proton acceptor residues include histidine 343 and cysteine 373.

Belongs to the thiolase-like superfamily. Thiolase family. In terms of assembly, heterotetramer of two alpha chains (FadB) and two beta chains (FadA).

The protein localises to the cytoplasm. The catalysed reaction is an acyl-CoA + acetyl-CoA = a 3-oxoacyl-CoA + CoA. It functions in the pathway lipid metabolism; fatty acid beta-oxidation. Functionally, catalyzes the final step of fatty acid oxidation in which acetyl-CoA is released and the CoA ester of a fatty acid two carbons shorter is formed. The protein is 3-ketoacyl-CoA thiolase of Aliivibrio salmonicida (strain LFI1238) (Vibrio salmonicida (strain LFI1238)).